We begin with the raw amino-acid sequence, 389 residues long: MGSSEMEKSGKEKEPKTTPPSTSSSAPATVVSQEPSSAVSAGVAVTQDWSGFQAYSPMPPHGYVASSPQPHPYMWGVQHMMPPYGTPPHPYVTMYPPGGMYAHPSLPPGSYPYSPYAMPSPNGMAEASGNTGSVIEGDGKPSDGKEKLPIKRSKGSLGSLNMIIGKNNEAGKNSGASANGACSKSAESGSDGSSDGSDANSQNDSGSRHNGKDGETASESGGSAHGPPRNGSNLPVNQTVAIMPVSATGVPGPPTNLNIGMDYWSGHGNVSGAVPGVVVDGSQSQPWLQVSDEREIKRQRRKQSNRESARRSRLRKQAECDELAQRAEVLNGENSSLRAEINKLKSQYEELLAENSSLKNKFSSAPSLEGGDLDKNEQEPQRSTRQDVA.

The span at 1 to 16 (MGSSEMEKSGKEKEPK) shows a compositional bias: basic and acidic residues. Disordered stretches follow at residues 1–42 (MGSS…VSAG), 124–154 (MAEA…KRSK), 170–236 (AGKN…NLPV), 285–318 (QPWL…RKQA), and 356–389 (SSLK…QDVA). Positions 19–32 (PPSTSSSAPATVVS) are enriched in low complexity. Basic and acidic residues predominate over residues 137–149 (GDGKPSDGKEKLP). K154 is covalently cross-linked (Glycyl lysine isopeptide (Lys-Gly) (interchain with G-Cter in ubiquitin)). Residues 170–205 (AGKNSGASANGACSKSAESGSDGSSDGSDANSQNDS) show a composition bias toward low complexity. 2 stretches are compositionally biased toward basic and acidic residues: residues 206-215 (GSRHNGKDGE) and 304-318 (SNRE…RKQA). The bZIP domain occupies 295–358 (EIKRQRRKQS…EELLAENSSL (64 aa)). The basic motif stretch occupies residues 297–316 (KRQRRKQSNRESARRSRLRK). Residues 323–358 (LAQRAEVLNGENSSLRAEINKLKSQYEELLAENSSL) are leucine-zipper. The span at 356 to 366 (SSLKNKFSSAP) shows a compositional bias: polar residues. The span at 372 to 389 (DLDKNEQEPQRSTRQDVA) shows a compositional bias: basic and acidic residues.

Belongs to the bZIP family. Monomer, homodimer and heterodimers with GBF1/BZIP41, GBF2/BZIP54 and GBF3/BZIP55. Heterodimers with BZIP16. Interacts with GIP1.

It localises to the nucleus. Transcriptional activator that binds to the G-box motif (5'-CACGTG-3') and other cis-acting elements with 5'-ACGT-3' core, such as Hex, C-box and as-1 motifs. Possesses high binding affinity to G-box, much lower affinity to Hex and C-box, and little affinity to as-1 element. G-box and G-box-like motifs are cis-acting elements defined in promoters of certain plant genes which are regulated by such diverse stimuli as light-induction or hormone control. Binds to the G-box motif 5'-CACGTG-3' of LHCB2.4 (At3g27690) promoter. May act as transcriptional activator in light-regulated expression of LHCB2.4. Probably binds DNA as monomer. DNA-binding activity is redox-dependent. This is bZIP transcription factor 68 from Arabidopsis thaliana (Mouse-ear cress).